We begin with the raw amino-acid sequence, 676 residues long: Methionine--tRNA ligase (676 aa).

The 'HIGH' region signature appears at 15-25 (PYANGSIHLGH). Cys-146, Cys-149, Cys-159, and Cys-162 together coordinate Zn(2+). The short motif at 332–336 (KMSKS) is the 'KMSKS' region element. Lys-335 contacts ATP. The region spanning 574-676 (DFAKVDMRIA…SGAQPGMQVK (103 aa)) is the tRNA-binding domain.

Belongs to the class-I aminoacyl-tRNA synthetase family. MetG type 1 subfamily. As to quaternary structure, homodimer. Zn(2+) serves as cofactor.

It is found in the cytoplasm. It carries out the reaction tRNA(Met) + L-methionine + ATP = L-methionyl-tRNA(Met) + AMP + diphosphate. Functionally, is required not only for elongation of protein synthesis but also for the initiation of all mRNA translation through initiator tRNA(fMet) aminoacylation. The chain is Methionine--tRNA ligase from Pectobacterium atrosepticum (strain SCRI 1043 / ATCC BAA-672) (Erwinia carotovora subsp. atroseptica).